The primary structure comprises 415 residues: tRNA(Met) cytidine acetate ligase (415 aa).

ATP is bound by residues 7–20 (IVEY…HLYH), G102, N165, and 190–191 (RI).

The protein belongs to the TmcAL family.

Its subcellular location is the cytoplasm. It catalyses the reaction cytidine(34) in elongator tRNA(Met) + acetate + ATP = N(4)-acetylcytidine(34) in elongator tRNA(Met) + AMP + diphosphate. In terms of biological role, catalyzes the formation of N(4)-acetylcytidine (ac(4)C) at the wobble position of elongator tRNA(Met), using acetate and ATP as substrates. First activates an acetate ion to form acetyladenylate (Ac-AMP) and then transfers the acetyl group to tRNA to form ac(4)C34. This chain is tRNA(Met) cytidine acetate ligase, found in Acetivibrio thermocellus (strain ATCC 27405 / DSM 1237 / JCM 9322 / NBRC 103400 / NCIMB 10682 / NRRL B-4536 / VPI 7372) (Clostridium thermocellum).